Here is a 143-residue protein sequence, read N- to C-terminus: uncharacterized protein (143 aa).

A compositionally biased stretch (basic and acidic residues) spans 1–14 (MPAAKKQIEEKPEV). Positions 1–25 (MPAAKKQIEEKPEVEQDLGAPDFSD) are disordered.

This is an uncharacterized protein from Pseudoalteromonas phage PM2 (Bacteriophage PM2).